Consider the following 197-residue polypeptide: Probable GTP-binding protein EngB (197 aa).

One can recognise an EngB-type G domain in the interval 22-197 (TGVEVAFAGR…FKEKLDTWYQ (176 aa)). Residues 30–37 (GRSNAGKS), 57–61 (GRTQL), 75–78 (DLPG), 142–145 (TKAD), and 177–179 (FSS) each bind GTP. Serine 37 and threonine 59 together coordinate Mg(2+).

This sequence belongs to the TRAFAC class TrmE-Era-EngA-EngB-Septin-like GTPase superfamily. EngB GTPase family. Mg(2+) is required as a cofactor.

Functionally, necessary for normal cell division and for the maintenance of normal septation. This chain is Probable GTP-binding protein EngB, found in Francisella tularensis subsp. tularensis (strain FSC 198).